The chain runs to 439 residues: Elongation factor 1-alpha 2 (439 aa).

The region spanning Lys6–Ile229 is the tr-type G domain. Residues Gly15–Ser22 form a G1 region. Gly15–Ser22 provides a ligand contact to GTP. The G2 stretch occupies residues Gly71–Asn75. The tract at residues Asp92 to Gly95 is G3. GTP is bound by residues Asp92–His96 and Asn154–Asp157. Residues Asn154 to Asp157 form a G4 region. Residues Ser193 to Phe195 are G5.

Belongs to the TRAFAC class translation factor GTPase superfamily. Classic translation factor GTPase family. EF-Tu/EF-1A subfamily.

Its subcellular location is the cytoplasm. Functionally, this protein promotes the GTP-dependent binding of aminoacyl-tRNA to the A-site of ribosomes during protein biosynthesis. The polypeptide is Elongation factor 1-alpha 2 (EFA2) (Euplotes crassus).